We begin with the raw amino-acid sequence, 317 residues long: Melanocyte-stimulating hormone receptor (317 aa).

The Extracellular portion of the chain corresponds to 1–37 (MPVLGSQRRLLGSLNCTPPATFPLTLAPNRTGPQCLE). N-linked (GlcNAc...) asparagine glycosylation is present at Asn29. The chain crosses the membrane as a helical span at residues 38-63 (VAIPDGLFLSLGLVSLVENVLVVAAI). Residues 64–72 (AKNRNLQSP) are Cytoplasmic-facing. The chain crosses the membrane as a helical span at residues 73 to 93 (MYYFICCLAMSDLLVSVSNVL). The Extracellular portion of the chain corresponds to 94–118 (ETAVMLLLEAGALAARAAVVQQLDN). A helical transmembrane segment spans residues 119–140 (VIDVLICGSMVSSLCFLGAIAV). Residues 141-163 (DRYISIFYALRYHSVVTLPRAWR) lie on the Cytoplasmic side of the membrane. A helical transmembrane segment spans residues 164–183 (IIAAIWVASILTSLLFITYY). Topologically, residues 184–191 (NHTVVLLC) are extracellular. Residues 192–211 (LVGFFIAMLALMAVLYVHML) traverse the membrane as a helical segment. The Cytoplasmic portion of the chain corresponds to 212–240 (ARACQHARGIARLQKRQRPIHQGFGLKGA). The chain crosses the membrane as a helical span at residues 241-266 (ATLTILLGVFFLCWGPFFLHLSLIVL). The Extracellular portion of the chain corresponds to 267–279 (CPQHPTCGCIFKN). A helical transmembrane segment spans residues 280-300 (FNLFLALIICNAIVDPLIYAF). The Cytoplasmic segment spans residues 301-317 (RSQELRKTLQEVLQCSW). Cys315 is lipidated: S-palmitoyl cysteine.

It belongs to the G-protein coupled receptor 1 family. As to quaternary structure, interacts with MGRN1, but does not undergo MGRN1-mediated ubiquitination; this interaction competes with GNAS-binding and thus inhibits agonist-induced cAMP production. Interacts with OPN3; the interaction results in a decrease in MC1R-mediated cAMP signaling and ultimately a decrease in melanin production in melanocytes.

The protein resides in the cell membrane. In terms of biological role, receptor for MSH (alpha, beta and gamma) and ACTH. The activity of this receptor is mediated by G proteins which activate adenylate cyclase. Mediates melanogenesis, the production of eumelanin (black/brown) and phaeomelanin (red/yellow), via regulation of cAMP signaling in melanocytes. In Cervus elaphus (Red deer), this protein is Melanocyte-stimulating hormone receptor (MC1R).